The following is a 444-amino-acid chain: Jacalin-related lectin 11 (444 aa).

At Ala2 the chain carries N-acetylalanine. Jacalin-type lectin domains are found at residues 2–143 (ALKV…YFIK), 146–290 (SIQS…YYAP), and 298–442 (PEKL…HVTA).

It belongs to the jacalin lectin family.

The sequence is that of Jacalin-related lectin 11 (JAL11) from Arabidopsis thaliana (Mouse-ear cress).